Reading from the N-terminus, the 147-residue chain is UPF0306 protein YPK_3704 (147 aa).

This sequence belongs to the UPF0306 family.

This Yersinia pseudotuberculosis serotype O:3 (strain YPIII) protein is UPF0306 protein YPK_3704.